Here is a 478-residue protein sequence, read N- to C-terminus: Allene oxide synthase 2 (478 aa).

Heme b is bound by residues Lys-88, His-119, and Lys-123. Asn-278 is a binding site for (13S)-hydroperoxy-(9Z,11E,15Z)-octadecatrienoate. Residues Lys-427 and Cys-429 each coordinate heme b.

The protein belongs to the cytochrome P450 family. It depends on heme b as a cofactor. Weakly expressed in roots, shoots, leaves and flowers.

The enzyme catalyses (13S)-hydroperoxy-(9Z,11E,15Z)-octadecatrienoate = (9Z,13S,15Z)-12,13-epoxyoctadeca-9,11,15-trienoate + H2O. Its pathway is lipid metabolism; oxylipin biosynthesis. Its function is as follows. Involved in the biosynthesis of jasmonic acid, a growth regulator that is implicated also as a signaling molecule in plant defense. Converts 13-hydroperoxylinolenic acid to 12,13-epoxylinolenic acid. This chain is Allene oxide synthase 2 (CYP74A2), found in Oryza sativa subsp. japonica (Rice).